The sequence spans 245 residues: Dehydrogenase/reductase SDR family member 6 (245 aa).

NAD(+)-binding positions include 16–18, D37, and D58; that span reads QGI. R144 lines the substrate pocket. The active-site Proton acceptor is the Y147. NAD(+) is bound by residues K151 and 180–184; that span reads VDTPS. Substrate is bound by residues R188 and R205.

This sequence belongs to the short-chain dehydrogenases/reductases (SDR) family. As to quaternary structure, homotetramer.

The protein localises to the cytoplasm. The enzyme catalyses cis-4-hydroxy-L-proline + NAD(+) = 4-oxo-L-proline + NADH + H(+). The catalysed reaction is (R)-3-hydroxybutanoate + NAD(+) = acetoacetate + NADH + H(+). The protein operates within amino-acid metabolism. It participates in siderophore biosynthesis. In terms of biological role, NAD(H)-dependent dehydrogenase/reductase with a preference for cyclic substrates. Catalyzes stereoselective conversion of 4-oxo-L-proline to cis-4-hydroxy-L-proline, likely a detoxification mechanism for ketoprolines. Mediates the formation of 2,5-dihydroxybenzoate (2,5-DHBA), a siderophore that chelates free cytoplasmic iron, thereby regulating iron transport and homeostasis while protecting cells against free radical-induced oxidative stress. The iron-siderophore complex is imported into mitochondria, providing an iron source for mitochondrial metabolic processes in particular heme synthesis. May act as a 3-hydroxybutyrate dehydrogenase. The sequence is that of Dehydrogenase/reductase SDR family member 6 (bdh2) from Danio rerio (Zebrafish).